A 540-amino-acid polypeptide reads, in one-letter code: Ribonuclease Y (540 aa).

The chain crosses the membrane as a helical span at residues 4–24 (TILVPVAVAIVSVLVGGCAGY). Residues 230–293 (TVSVVNLPND…EIAKRALERL (64 aa)) form the KH domain. An HD domain is found at 356–449 (VLSHSIEVGK…VVAADTISSA (94 aa)).

The protein belongs to the RNase Y family.

Its subcellular location is the cell membrane. Functionally, endoribonuclease that initiates mRNA decay. This is Ribonuclease Y from Lactobacillus gasseri (strain ATCC 33323 / DSM 20243 / BCRC 14619 / CIP 102991 / JCM 1131 / KCTC 3163 / NCIMB 11718 / NCTC 13722 / AM63).